A 359-amino-acid chain; its full sequence is MSELVADPTGRAVLRAVAPGTELRDGLERILRGRTGALIVLGYDEVVEEMCSGGFVLDVAFSATRLRELAKMDGAIVLDRGATRVLRAAVQLLPDAAIETGESGTRHRTAERAAKQTGFPVISVSQSMRIVAIYSDGRRWVLEDSDAILSRANQALATLERYKSRLDEVSGTLSALEIEDLVTVRDVASVVQRLEMVRRISVEIAGYVDELGTDGRLLSLQLDELIGNVGPERELVVSDYVDARRAAALDDVLAGLARLDSTDLIDLVKIAQVRGLGGPGGDALDSAVGPRGHRMLSKIPRLPSPVIGAMVDHFGTLQKMLSASVEDLQLVDGVGALRARSVREGLSRLAESSLLERFV.

One can recognise a DAC domain in the interval 7–145 (DPTGRAVLRA…DGRRWVLEDS (139 aa)). Residues glycine 74, leucine 92, and 105 to 109 (TRHRT) each bind ATP.

It belongs to the DisA family. In terms of assembly, homooctamer. It depends on Mg(2+) as a cofactor.

The catalysed reaction is 2 ATP = 3',3'-c-di-AMP + 2 diphosphate. Its function is as follows. Participates in a DNA-damage check-point. DisA forms globular foci that rapidly scan along the chromosomes searching for lesions. Also has diadenylate cyclase activity, catalyzing the condensation of 2 ATP molecules into cyclic di-AMP (c-di-AMP). c-di-AMP likely acts as a signaling molecule that may couple DNA integrity with a cellular process. This is DNA integrity scanning protein DisA from Beutenbergia cavernae (strain ATCC BAA-8 / DSM 12333 / CCUG 43141 / JCM 11478 / NBRC 16432 / NCIMB 13614 / HKI 0122).